Reading from the N-terminus, the 359-residue chain is tRNA-specific 2-thiouridylase MnmA (359 aa).

Residues 9–16 (GLSGGVDS) and M35 each bind ATP. Residues 95 to 97 (NPD) form an interaction with target base in tRNA region. Catalysis depends on C100, which acts as the Nucleophile. Residues C100 and C197 are joined by a disulfide bond. Position 124 (G124) interacts with ATP. The interval 147-149 (KDQ) is interaction with tRNA. C197 acts as the Cysteine persulfide intermediate in catalysis. The tract at residues 309 to 310 (RY) is interaction with tRNA.

It belongs to the MnmA/TRMU family.

It is found in the cytoplasm. The enzyme catalyses S-sulfanyl-L-cysteinyl-[protein] + uridine(34) in tRNA + AH2 + ATP = 2-thiouridine(34) in tRNA + L-cysteinyl-[protein] + A + AMP + diphosphate + H(+). In terms of biological role, catalyzes the 2-thiolation of uridine at the wobble position (U34) of tRNA, leading to the formation of s(2)U34. This is tRNA-specific 2-thiouridylase MnmA from Cupriavidus metallidurans (strain ATCC 43123 / DSM 2839 / NBRC 102507 / CH34) (Ralstonia metallidurans).